We begin with the raw amino-acid sequence, 485 residues long: Protein DETOXIFICATION 14 (485 aa).

Helical transmembrane passes span 30-50 (LSYI…LQVI), 68-88 (IAVS…ASAL), 112-132 (IVSL…IGDI), 147-167 (GKFA…QPLV), 175-195 (LILP…VLCW), 207-227 (GAAI…GLYM), 259-279 (ASMI…SGIL), 288-308 (VLSV…SLGA), 329-349 (AVYT…AIVF), 372-392 (MAPL…LSGV), 405-425 (VNLA…AFGF), and 432-452 (LWIG…LIVI).

It belongs to the multi antimicrobial extrusion (MATE) (TC 2.A.66.1) family.

The protein localises to the membrane. The chain is Protein DETOXIFICATION 14 from Arabidopsis thaliana (Mouse-ear cress).